The following is a 410-amino-acid chain: WD repeat and FYVE domain-containing protein 1 (410 aa).

6 WD repeats span residues 22 to 61 (GHQDAVTAALLIPKEDGVITASEDRTIRVWLKRDSGQYWP), 66 to 105 (TMASPCSAMAYHHDSRRIFVGQDNGAVMEFHVSEDFNKMN), 112 to 150 (AHQNRVTAIIFSLATEWVISTGHDKCVSWMCTRSGNMLG), 153 to 192 (FFSSWASCLQYDFDTQYAFVGDYSGQITLLKLEQSTCSVI), 197 to 236 (GHEGSIACLWWDPIQRLLFSGASDNSVIMWDIGGRKGRTL), and 240 to 279 (GHHDRVQALCYLQLTRQLVSCSSDGGIAVWNMDVSREEAP). An FYVE-type zinc finger spans residues 281–352 (WLESDSCQKC…VCDSCYDSIK (72 aa)). 8 residues coordinate Zn(2+): cysteine 287, cysteine 290, cysteine 314, cysteine 317, cysteine 322, cysteine 325, cysteine 344, and cysteine 347. The stretch at 364 to 403 (EGKHNISHMSMDVARGLMVTCGTDRVVKIWDMTPVVGCSL) is one WD 7 repeat. Serine 408 carries the phosphoserine modification.

In terms of assembly, binds PtdIns3P in vitro with high specificity over other phosphoinositides. Interacts (via WD repeat 2) with tyrosine-phosphorylated TLR3 (via TIR domain) in response to poly(I:C). Interacts with TLR4 in response to LPS. Interacts with TICAM1 in response to poly(I:C).

The protein localises to the early endosome. Functionally, positively regulates TLR3- and TLR4-mediated signaling pathways by bridging the interaction between TLR3 or TLR4 and TICAM1. Promotes TLR3/4 ligand-induced activation of transcription factors IRF3 and NF-kappa-B, as well as the production of IFN-beta and inflammatory cytokines. In Bos taurus (Bovine), this protein is WD repeat and FYVE domain-containing protein 1 (WDFY1).